A 584-amino-acid polypeptide reads, in one-letter code: 2-succinyl-5-enolpyruvyl-6-hydroxy-3-cyclohexene-1-carboxylate synthase (584 aa).

This sequence belongs to the TPP enzyme family. MenD subfamily. As to quaternary structure, homodimer. Mg(2+) is required as a cofactor. The cofactor is Mn(2+). It depends on thiamine diphosphate as a cofactor.

It catalyses the reaction isochorismate + 2-oxoglutarate + H(+) = 5-enolpyruvoyl-6-hydroxy-2-succinyl-cyclohex-3-ene-1-carboxylate + CO2. It functions in the pathway quinol/quinone metabolism; 1,4-dihydroxy-2-naphthoate biosynthesis; 1,4-dihydroxy-2-naphthoate from chorismate: step 2/7. It participates in quinol/quinone metabolism; menaquinone biosynthesis. In terms of biological role, catalyzes the thiamine diphosphate-dependent decarboxylation of 2-oxoglutarate and the subsequent addition of the resulting succinic semialdehyde-thiamine pyrophosphate anion to isochorismate to yield 2-succinyl-5-enolpyruvyl-6-hydroxy-3-cyclohexene-1-carboxylate (SEPHCHC). This is 2-succinyl-5-enolpyruvyl-6-hydroxy-3-cyclohexene-1-carboxylate synthase from Bacillus cytotoxicus (strain DSM 22905 / CIP 110041 / 391-98 / NVH 391-98).